The primary structure comprises 269 residues: Oligoribonuclease, mitochondrial (269 aa).

Positions 55-227 (LVWIDCEMTG…SDIKESIAQL (173 aa)) constitute an Exonuclease domain. Tyr-184 is a catalytic residue. The interval 240–269 (ETESVESIGSEQPESPSSSTSSLKRQRTDF) is disordered. Low complexity predominate over residues 245–261 (ESIGSEQPESPSSSTSS).

The protein belongs to the oligoribonuclease family.

It is found in the mitochondrion. Its function is as follows. 3'-to-5' exoribonuclease specific for small oligoribonucleotides. This Saccharomyces cerevisiae (strain ATCC 204508 / S288c) (Baker's yeast) protein is Oligoribonuclease, mitochondrial (REX2).